The following is a 536-amino-acid chain: Chromosomal replication initiator protein DnaA (536 aa).

The segment at 1–72 is domain I, interacts with DnaA modulators; the sequence is MNDFWQHCSA…DLARDFWNAP (72 aa). The domain II stretch occupies residues 72–199; it reads PIEVQFVLDP…EAADSMYERS (128 aa). The segment at 97–121 is disordered; that stretch reads RAPLPAANPAPVTAGPAPSGAADAN. Residues 105-121 show a composition bias toward low complexity; the sequence is PAPVTAGPAPSGAADAN. Positions 200-416 are domain III, AAA+ region; it reads KLNPVLTFDN…GALRKILAYS (217 aa). ATP contacts are provided by glycine 244, glycine 246, lysine 247, and threonine 248. The domain IV, binds dsDNA stretch occupies residues 417-536; it reads KFHGREITIE…LHVLEQTLKG (120 aa).

This sequence belongs to the DnaA family. As to quaternary structure, oligomerizes as a right-handed, spiral filament on DNA at oriC.

Its subcellular location is the cytoplasm. Plays an essential role in the initiation and regulation of chromosomal replication. ATP-DnaA binds to the origin of replication (oriC) to initiate formation of the DNA replication initiation complex once per cell cycle. Binds the DnaA box (a 9 base pair repeat at the origin) and separates the double-stranded (ds)DNA. Forms a right-handed helical filament on oriC DNA; dsDNA binds to the exterior of the filament while single-stranded (ss)DNA is stabiized in the filament's interior. The ATP-DnaA-oriC complex binds and stabilizes one strand of the AT-rich DNA unwinding element (DUE), permitting loading of DNA polymerase. After initiation quickly degrades to an ADP-DnaA complex that is not apt for DNA replication. Binds acidic phospholipids. This chain is Chromosomal replication initiator protein DnaA, found in Burkholderia thailandensis (strain ATCC 700388 / DSM 13276 / CCUG 48851 / CIP 106301 / E264).